The primary structure comprises 371 residues: GDP-perosamine synthase (371 aa).

Residue Lys186 is modified to N6-(pyridoxal phosphate)lysine.

This sequence belongs to the DegT/DnrJ/EryC1 family. In terms of assembly, homodimer. Pyridoxal 5'-phosphate is required as a cofactor.

The enzyme catalyses GDP-alpha-D-perosamine + 2-oxoglutarate = GDP-4-dehydro-alpha-D-rhamnose + L-glutamate. Its pathway is bacterial outer membrane biogenesis; LPS O-antigen biosynthesis. Its function is as follows. Catalyzes the synthesis of GDP-perosamine from GDP-4-keto-6-deoxy-D-mannose and L-glutamate. Can use only L-glutamate as amino donor. In vitro, can also use GDP-4-keto-3,6-dideoxymannose to produce GDP-3-deoxyperosamine. Involved in the formation of S-LPS, which is required for attachment of the protein S-layer to the outer membrane surface. The protein is GDP-perosamine synthase of Caulobacter vibrioides (strain ATCC 19089 / CIP 103742 / CB 15) (Caulobacter crescentus).